We begin with the raw amino-acid sequence, 149 residues long: Deoxyuridine 5'-triphosphate nucleotidohydrolase (149 aa).

Substrate is bound by residues 68-70 (RSG), asparagine 81, 85-87 (LID), and methionine 95.

The protein belongs to the dUTPase family. Mg(2+) is required as a cofactor.

It catalyses the reaction dUTP + H2O = dUMP + diphosphate + H(+). The protein operates within pyrimidine metabolism; dUMP biosynthesis; dUMP from dCTP (dUTP route): step 2/2. In terms of biological role, this enzyme is involved in nucleotide metabolism: it produces dUMP, the immediate precursor of thymidine nucleotides and it decreases the intracellular concentration of dUTP so that uracil cannot be incorporated into DNA. This is Deoxyuridine 5'-triphosphate nucleotidohydrolase from Janthinobacterium sp. (strain Marseille) (Minibacterium massiliensis).